The sequence spans 83 residues: MASDVRGRRKTKIGVVVSSKMEKTVVVRVERVYSHPQYAKVVRDSSKYYAHNELDVKEGDTVRIQETRPLSKTKRWRVVGRVN.

This sequence belongs to the universal ribosomal protein uS17 family. Part of the 30S ribosomal subunit.

One of the primary rRNA binding proteins, it binds specifically to the 5'-end of 16S ribosomal RNA. In Chlamydia trachomatis serovar L2 (strain ATCC VR-902B / DSM 19102 / 434/Bu), this protein is Small ribosomal subunit protein uS17.